The following is a 142-amino-acid chain: 5a,11a-dehydrotetracycline/5a,11a-dehydrooxytetracycline reductase (142 aa).

Belongs to the pyridoxamine 5'-phosphate oxidase family.

The enzyme catalyses tetracycline + oxidized coenzyme F420-(gamma-L-Glu)(n) + H(+) = 5a,11a-dehydrotetracycline + reduced coenzyme F420-(gamma-L-Glu)(n). The catalysed reaction is oxytetracycline + oxidized coenzyme F420-(gamma-L-Glu)(n) + H(+) = 5a,11a-dehydrooxytetracycline + reduced coenzyme F420-(gamma-L-Glu)(n). It participates in antibiotic biosynthesis; oxytetracycline biosynthesis. Functionally, involved in the biosynthesis of the antibiotics tetracycline and oxytetracycline. Catalyzes the C(5) reduction of 5a,11a-dehydrooxytetracycline to yield oxytetracycline as a major product. Also catalyzes the C(12) reduction of 5a,11a-dehydrotetracycline (12-dehydrotetracycline) to produce tetracycline as a minor product. The chain is 5a,11a-dehydrotetracycline/5a,11a-dehydrooxytetracycline reductase from Streptomyces rimosus subsp. rimosus (strain ATCC 10970 / DSM 40260 / JCM 4667 / NRRL 2234).